A 475-amino-acid polypeptide reads, in one-letter code: Aspartyl/glutamyl-tRNA(Asn/Gln) amidotransferase subunit B (475 aa).

It belongs to the GatB/GatE family. GatB subfamily. In terms of assembly, heterotrimer of A, B and C subunits.

The catalysed reaction is L-glutamyl-tRNA(Gln) + L-glutamine + ATP + H2O = L-glutaminyl-tRNA(Gln) + L-glutamate + ADP + phosphate + H(+). It carries out the reaction L-aspartyl-tRNA(Asn) + L-glutamine + ATP + H2O = L-asparaginyl-tRNA(Asn) + L-glutamate + ADP + phosphate + 2 H(+). Allows the formation of correctly charged Asn-tRNA(Asn) or Gln-tRNA(Gln) through the transamidation of misacylated Asp-tRNA(Asn) or Glu-tRNA(Gln) in organisms which lack either or both of asparaginyl-tRNA or glutaminyl-tRNA synthetases. The reaction takes place in the presence of glutamine and ATP through an activated phospho-Asp-tRNA(Asn) or phospho-Glu-tRNA(Gln). In Staphylococcus aureus (strain MRSA252), this protein is Aspartyl/glutamyl-tRNA(Asn/Gln) amidotransferase subunit B.